The following is a 73-amino-acid chain: Protein F9 homolog (73 aa).

Residues 1–34 are Virion surface-facing; the sequence is GHAAANCALARVATALTRRVPASRHGLAEGGTPP. Residues 35–55 form a helical membrane-spanning segment; the sequence is WTLLLAVAAVTVLGVVAVSLL. At 56-73 the chain is on the intravirion side; the sequence is RRALRVRYRFARPAALRA.

This sequence belongs to the chordopoxvirinae L1 protein family.

The protein resides in the virion membrane. The polypeptide is Protein F9 homolog (Capra hircus (Goat)).